We begin with the raw amino-acid sequence, 452 residues long: Pre-mRNA-splicing factor prp46 (452 aa).

Positions 61-70 (AAKQAQAAAA) are enriched in low complexity. A disordered region spans residues 61-129 (AAKQAQAAAA…SATRQQPPEW (69 aa)). Residues 114 to 125 (SLIQRPSATRQQ) show a composition bias toward polar residues. WD repeat units follow at residues 141–180 (GHLG…LRLT), 183–222 (GHIS…VIRH), 225–264 (GHLS…NIHV), 267–308 (GHTG…GVLT), 310–349 (HKKG…QNFE), 350–388 (GHNA…RYQT), and 399–438 (EAEA…TPET). Positions 432 to 452 (DQATPETHPVTWAPTLGRQRY) are disordered.

Belongs to the WD repeat PRL1/PRL2 family. In terms of assembly, associated with the spliceosome.

The protein localises to the cytoplasm. It is found in the nucleus. In terms of biological role, involved in pre-mRNA splicing and required for cell cycle progression at G2/M. The sequence is that of Pre-mRNA-splicing factor prp46 (prp46) from Emericella nidulans (strain FGSC A4 / ATCC 38163 / CBS 112.46 / NRRL 194 / M139) (Aspergillus nidulans).